Here is a 218-residue protein sequence, read N- to C-terminus: Large ribosomal subunit protein uL3 (218 aa).

The disordered stretch occupies residues 126–163 (HGFSRGPMTHGSKNHRQPGSIGAGTTPGRIYPGKRMSG).

The protein belongs to the universal ribosomal protein uL3 family. Part of the 50S ribosomal subunit. Forms a cluster with proteins L14 and L19.

One of the primary rRNA binding proteins, it binds directly near the 3'-end of the 23S rRNA, where it nucleates assembly of the 50S subunit. The sequence is that of Large ribosomal subunit protein uL3 from Synechococcus sp. (strain CC9311).